Reading from the N-terminus, the 149-residue chain is MQVILLDKIAHLGNVGDQVSVKAGFARNFLIPQGKAVMATQANIEYFESRRAELERKAAEVLATAQARANQLAELATVTITSKAGDEGRLFGSITARDVAEAVTAAGVEIAKSEVRLSTGPLRTTGEHQVRFQLHGEVFATLNVVIVAE.

The protein belongs to the bacterial ribosomal protein bL9 family.

In terms of biological role, binds to the 23S rRNA. The polypeptide is Large ribosomal subunit protein bL9 (Histophilus somni (strain 129Pt) (Haemophilus somnus)).